A 535-amino-acid chain; its full sequence is Nuclear/nucleolar GTPase 2 (535 aa).

A disordered region spans residues 1–42 (MAKKKERAVNVSGKPRHSLDVNRANDKKGAGGGAGGGGGGRS). Over residues 17–29 (HSLDVNRANDKKG) the composition is skewed to basic and acidic residues. Over residues 30–41 (AGGGAGGGGGGR) the composition is skewed to gly residues. Positions 213–374 (WGELYKVIDS…LIDCPGVVYQ (162 aa)) constitute a CP-type G domain. The tract at residues 261–264 (NKCD) is G4. Positions 290–292 (SIN) are G5. Residues 323 to 330 (GYPNVGKS) are G1. The tract at residues 349–353 (GETKV) is G2. A G3 region spans residues 367 to 370 (DCPG). Residues 464 to 494 (FFVPPPQQGEDSPSETAEPVEKSDEEGVSSD) form a disordered region.

It belongs to the TRAFAC class YlqF/YawG GTPase family. RsgA subfamily. In terms of assembly, interacts (via N-terminus) with the 60S ribosomal proteins RPL10A. This interaction is enhanced by the addition of GTP. As to expression, expressed in roots, shoot apical meristem, leaves, leaf sheaths and flowers.

The protein resides in the nucleus. It is found in the nucleolus. With respect to regulation, the GTPase activity is stimulated in the presence of ribosomes, particularly of the 60S subunit. Its function is as follows. GTPase involved in pre-60S ribosomal subunit maturation. In Oryza sativa subsp. japonica (Rice), this protein is Nuclear/nucleolar GTPase 2.